Consider the following 286-residue polypeptide: Aminoglycoside N(3)-acetyltransferase VIII (286 aa).

The protein belongs to the antibiotic N-acetyltransferase family.

It carries out the reaction a 2-deoxystreptamine antibiotic + acetyl-CoA = an N(3)-acetyl-2-deoxystreptamine antibiotic + CoA + H(+). In terms of biological role, resistance to neomycin. In Streptomyces fradiae (Streptomyces roseoflavus), this protein is Aminoglycoside N(3)-acetyltransferase VIII (aacC8).